The following is a 210-amino-acid chain: 3-demethoxyubiquinol 3-hydroxylase (210 aa).

6 residues coordinate Fe cation: Glu59, Glu89, His92, Glu141, Glu173, and His176.

It belongs to the COQ7 family. Fe cation is required as a cofactor.

It localises to the cell membrane. It catalyses the reaction a 5-methoxy-2-methyl-3-(all-trans-polyprenyl)benzene-1,4-diol + AH2 + O2 = a 3-demethylubiquinol + A + H2O. The protein operates within cofactor biosynthesis; ubiquinone biosynthesis. Functionally, catalyzes the hydroxylation of 2-nonaprenyl-3-methyl-6-methoxy-1,4-benzoquinol during ubiquinone biosynthesis. The polypeptide is 3-demethoxyubiquinol 3-hydroxylase (Marinomonas sp. (strain MWYL1)).